The primary structure comprises 261 residues: Probable membrane transporter protein PD_1894 (261 aa).

Helical transmembrane passes span 6–26, 45–64, 78–98, 99–119, 150–170, 175–195, 205–225, and 239–259; these read LIVT…LGGG, HIAI…ANLI, VIFA…GMLI, DGQR…LLML, AASG…LIFA, TINA…ITTL, WTIA…GTLL, and VFGL…WASL.

The protein belongs to the 4-toluene sulfonate uptake permease (TSUP) (TC 2.A.102) family.

It is found in the cell membrane. In Xylella fastidiosa (strain Temecula1 / ATCC 700964), this protein is Probable membrane transporter protein PD_1894.